Consider the following 323-residue polypeptide: ComG operon protein 2 (323 aa).

3 helical membrane-spanning segments follow: residues 93–113, 143–163, and 296–316; these read YPLF…SIII, LVII…WLVF, and MIYG…LVPM.

Belongs to the GSP F family.

It localises to the cell membrane. Required for transformation and DNA binding. This is ComG operon protein 2 (comGB) from Bacillus subtilis (strain 168).